A 154-amino-acid chain; its full sequence is MAAAWGSSLTAATQRAVTPWPRGRLLTASLGPQARREASSSSPEAGEGQIRLTDSCVQRLLEITEGSEFLRLQVEGGGCSGFQYKFSLDTVINPDDRVFEQGGARVVVDSDSLAFVKGAQVDFSQELIRSSFQVLNNPQAQQGCSCGSSFSIKL.

A mitochondrion-targeting transit peptide spans 1–8 (MAAAWGSS). The tract at residues 29–49 (SLGPQARREASSSSPEAGEGQ) is disordered. Residues 39 to 49 (SSSSPEAGEGQ) show a composition bias toward low complexity. The Fe cation site is built by Cys-79, Cys-144, and Cys-146.

The protein belongs to the HesB/IscA family. Heterotetramer; forms a dimer of dimers with IBA57. Interacts with [2Fe-2S]-ISCA2 forming the heterodimer [2Fe- 2S]-ISCA2-IBA57 complex; [2Fe-2S] cluster binding is absolutely required to promote the complex formation.

The protein resides in the mitochondrion. In terms of biological role, involved in the maturation of mitochondrial 4Fe-4S proteins functioning late in the iron-sulfur cluster assembly pathway. May be involved in the binding of an intermediate of Fe/S cluster assembly. This is Iron-sulfur cluster assembly 2 homolog, mitochondrial (ISCA2) from Homo sapiens (Human).